A 346-amino-acid chain; its full sequence is DNA primase small subunit PriS (346 aa).

Catalysis depends on residues D97, D99, and D280.

It belongs to the eukaryotic-type primase small subunit family. As to quaternary structure, heterodimer of a small subunit (PriS) and a large subunit (PriL). Mg(2+) serves as cofactor. Mn(2+) is required as a cofactor.

Functionally, catalytic subunit of DNA primase, an RNA polymerase that catalyzes the synthesis of short RNA molecules used as primers for DNA polymerase during DNA replication. The small subunit contains the primase catalytic core and has DNA synthesis activity on its own. Binding to the large subunit stabilizes and modulates the activity, increasing the rate of DNA synthesis while decreasing the length of the DNA fragments, and conferring RNA synthesis capability. The DNA polymerase activity may enable DNA primase to also catalyze primer extension after primer synthesis. May also play a role in DNA repair. The chain is DNA primase small subunit PriS from Thermococcus kodakarensis (strain ATCC BAA-918 / JCM 12380 / KOD1) (Pyrococcus kodakaraensis (strain KOD1)).